The following is a 307-amino-acid chain: Aspartate carbamoyltransferase catalytic subunit (307 aa).

Residues Arg59 and Thr60 each coordinate carbamoyl phosphate. An L-aspartate-binding site is contributed by Lys87. Carbamoyl phosphate contacts are provided by Arg109, His137, and Gln140. The L-aspartate site is built by Arg173 and Arg223. Carbamoyl phosphate-binding residues include Gly266 and Pro267.

This sequence belongs to the aspartate/ornithine carbamoyltransferase superfamily. ATCase family. In terms of assembly, heterododecamer (2C3:3R2) of six catalytic PyrB chains organized as two trimers (C3), and six regulatory PyrI chains organized as three dimers (R2).

The enzyme catalyses carbamoyl phosphate + L-aspartate = N-carbamoyl-L-aspartate + phosphate + H(+). It functions in the pathway pyrimidine metabolism; UMP biosynthesis via de novo pathway; (S)-dihydroorotate from bicarbonate: step 2/3. Functionally, catalyzes the condensation of carbamoyl phosphate and aspartate to form carbamoyl aspartate and inorganic phosphate, the committed step in the de novo pyrimidine nucleotide biosynthesis pathway. The sequence is that of Aspartate carbamoyltransferase catalytic subunit from Helicobacter pylori (strain HPAG1).